A 116-amino-acid polypeptide reads, in one-letter code: Beta-2-microglobulin (116 aa).

The first 19 residues, 1-19, serve as a signal peptide directing secretion; that stretch reads MRAIITFALFCVLYITVQA. Positions 24–111 constitute an Ig-like C1-type domain; that stretch reads PKVQVYSHFP…RHMSNTNAYS (88 aa). Cys44 and Cys99 are disulfide-bonded.

The protein belongs to the beta-2-microglobulin family. In terms of assembly, heterodimer of an alpha chain and a beta chain. Beta-2-microglobulin is the beta-chain of major histocompatibility complex class I molecules.

The protein localises to the secreted. In terms of biological role, component of the class I major histocompatibility complex (MHC). Involved in the presentation of peptide antigens to the immune system. The chain is Beta-2-microglobulin (b2m) from Labeobarbus intermedius (Lake tana barbels).